The sequence spans 252 residues: Triosephosphate isomerase (252 aa).

10 to 12 is a binding site for substrate; the sequence is NWK. Catalysis depends on histidine 96, which acts as the Electrophile. Catalysis depends on glutamate 168, which acts as the Proton acceptor. Substrate is bound by residues glycine 174, serine 214, and 235–236; that span reads GG.

This sequence belongs to the triosephosphate isomerase family. As to quaternary structure, homodimer.

The protein localises to the cytoplasm. It catalyses the reaction D-glyceraldehyde 3-phosphate = dihydroxyacetone phosphate. It participates in carbohydrate biosynthesis; gluconeogenesis. The protein operates within carbohydrate degradation; glycolysis; D-glyceraldehyde 3-phosphate from glycerone phosphate: step 1/1. In terms of biological role, involved in the gluconeogenesis. Catalyzes stereospecifically the conversion of dihydroxyacetone phosphate (DHAP) to D-glyceraldehyde-3-phosphate (G3P). This is Triosephosphate isomerase from Streptococcus thermophilus (strain CNRZ 1066).